A 493-amino-acid chain; its full sequence is Probable GTP-binding protein OBGM, mitochondrial (493 aa).

The N-terminal 28 residues, 1–28, are a transit peptide targeting the mitochondrion; that stretch reads MWLIRAIVPVRYLGSYKRPQKPPWMRNP. In terms of domain architecture, Obg spans 48–303; the sequence is TRMRDRFTLY…AVLILELKSI (256 aa). Disordered regions lie at residues 65–89 and 146–215; these read SGCSSVRRSRADRYGKPDGGNGGRG and GEIP…EDDD. Residues 187-196 are compositionally biased toward acidic residues; the sequence is SESDQDDTEQ. The 173-residue stretch at 304–476 folds into the OBG-type G domain; it reads ADVGLVGMPN…LKDGLKMLVD (173 aa). GTP contacts are provided by residues 310–317 and 356–360; these read GMPNAGKS and DIPGL.

Belongs to the TRAFAC class OBG-HflX-like GTPase superfamily. OBG GTPase family.

It is found in the mitochondrion. Its function is as follows. May bind GTP and have GTPase activity. The chain is Probable GTP-binding protein OBGM, mitochondrial (ATOBGM) from Arabidopsis thaliana (Mouse-ear cress).